Reading from the N-terminus, the 233-residue chain is Probable GTP-binding protein EngB (233 aa).

An EngB-type G domain is found at 23-209 (AVPEVAFAGR…QRIVAGWLCL (187 aa)). GTP-binding positions include 31-38 (GRSNAGKS), 58-62 (GRTQH), 82-85 (DLPG), 149-152 (TKAD), and 188-190 (FSS). Mg(2+) contacts are provided by Ser38 and Thr60.

Belongs to the TRAFAC class TrmE-Era-EngA-EngB-Septin-like GTPase superfamily. EngB GTPase family. It depends on Mg(2+) as a cofactor.

In terms of biological role, necessary for normal cell division and for the maintenance of normal septation. The protein is Probable GTP-binding protein EngB of Ralstonia pickettii (strain 12J).